Consider the following 285-residue polypeptide: Diaminopimelate epimerase 2 (285 aa).

Substrate is bound by residues Asn11, Asn63, 73–74, Asn158, Asn191, 209–210, and 219–220; these read GN, ER, and GS.

The protein belongs to the diaminopimelate epimerase family. Homodimer.

Its subcellular location is the cytoplasm. It catalyses the reaction (2S,6S)-2,6-diaminopimelate = meso-2,6-diaminopimelate. The protein operates within amino-acid biosynthesis; L-lysine biosynthesis via DAP pathway; DL-2,6-diaminopimelate from LL-2,6-diaminopimelate: step 1/1. In terms of biological role, catalyzes the stereoinversion of LL-2,6-diaminopimelate (L,L-DAP) to meso-diaminopimelate (meso-DAP), a precursor of L-lysine and an essential component of the bacterial peptidoglycan. In Nostoc sp. (strain PCC 7120 / SAG 25.82 / UTEX 2576), this protein is Diaminopimelate epimerase 2.